Reading from the N-terminus, the 67-residue chain is uncharacterized protein (67 aa).

2 consecutive transmembrane segments (helical) span residues 13–32 (IACLRSLSIKILIICHGFIV) and 42–64 (RLTNFFSIMILLTFSNFSRTLGL).

It is found in the membrane. This is an uncharacterized protein from Saccharomyces cerevisiae (strain ATCC 204508 / S288c) (Baker's yeast).